A 485-amino-acid polypeptide reads, in one-letter code: MTAPLPGQEEIADPAIARDEMVSAFEDQNQNLRSNTSYYEAERRPEAIGVTVPVQMQSLLAHVGYPRLYVDSIAERQAVEGFRLGDADEADEELWQWWQANNLDIEAPLGYTDAYVHGRSYITISRPDPQIDLGWDPNVPLIRVEPPTRMYAEIDPRIGRPAKAIRVAYDAEGNEIQAATLYTPNETFGWFRAEGEWVEWFSDPHGLGAVPVVPLPNRTRLSDLYGTSEITPELRSMTDAAARILMLMQATAELMGVPQRLIFGIKPEEIGVDPETGQTLFDAYLARILAFEDAEGKIQQFSAAELANFTNALDQIAKQVAAYTGLPPQYLSTAADNPASAEAIRAAESRLIKKVERKNAIFGGAWEEAMRLAYRLMKGGDVPPDMLRMETVWRDPSTPTYAAKADAATKLYGNGQGVIPRERARKDMGYSIAEREEMRRWDEEEAAMGLGLLGTMVDADPTVPGSPNPTPAPKPQPAIEGGDSA.

Positions Met456 to Ala485 are disordered. Residues Pro464–Gln476 show a composition bias toward pro residues.

It belongs to the SPP1-like portal protein family. Homododecamer.

Its subcellular location is the virion. Forms the portal vertex of the capsid. This portal plays critical roles in head assembly, genome packaging, neck/tail attachment, and genome ejection. The portal protein multimerizes as a single ring-shaped homododecamer arranged around a central channel. Binds to the terminase subunits to form the packaging machine. This Mycobacterium (Mycobacteriophage D29) protein is Portal protein (14).